The sequence spans 548 residues: Probable malate:quinone oxidoreductase (548 aa).

It belongs to the MQO family. The cofactor is FAD.

The enzyme catalyses (S)-malate + a quinone = a quinol + oxaloacetate. It participates in carbohydrate metabolism; tricarboxylic acid cycle; oxaloacetate from (S)-malate (quinone route): step 1/1. This Escherichia coli O127:H6 (strain E2348/69 / EPEC) protein is Probable malate:quinone oxidoreductase.